A 1007-amino-acid polypeptide reads, in one-letter code: Bifunctional glutamine synthetase adenylyltransferase/adenylyl-removing enzyme (1007 aa).

The interval 1-496 (MTREQLSLTV…LHERLFYRPL (496 aa)) is adenylyl removase. The tract at residues 505-1007 (NEDARLSGEA…GPPQRPATTA (503 aa)) is adenylyl transferase.

The protein belongs to the GlnE family. It depends on Mg(2+) as a cofactor.

The catalysed reaction is [glutamine synthetase]-O(4)-(5'-adenylyl)-L-tyrosine + phosphate = [glutamine synthetase]-L-tyrosine + ADP. It carries out the reaction [glutamine synthetase]-L-tyrosine + ATP = [glutamine synthetase]-O(4)-(5'-adenylyl)-L-tyrosine + diphosphate. Functionally, involved in the regulation of glutamine synthetase GlnA, a key enzyme in the process to assimilate ammonia. When cellular nitrogen levels are high, the C-terminal adenylyl transferase (AT) inactivates GlnA by covalent transfer of an adenylyl group from ATP to specific tyrosine residue of GlnA, thus reducing its activity. Conversely, when nitrogen levels are low, the N-terminal adenylyl removase (AR) activates GlnA by removing the adenylyl group by phosphorolysis, increasing its activity. The regulatory region of GlnE binds the signal transduction protein PII (GlnB) which indicates the nitrogen status of the cell. This is Bifunctional glutamine synthetase adenylyltransferase/adenylyl-removing enzyme from Leifsonia xyli subsp. xyli (strain CTCB07).